A 189-amino-acid chain; its full sequence is Phosphoheptose isomerase (189 aa).

The region spanning 34–189 is the SIS domain; sequence LVAALKGGKK…CDLVEKGLFK (156 aa). 49–51 is a binding site for substrate; it reads NGG. Residues H58 and E62 each coordinate Zn(2+). Residues E62, 91-92, 117-119, S122, and Q169 contribute to the substrate site; these read ND and STS. Positions 169 and 177 each coordinate Zn(2+).

This sequence belongs to the SIS family. GmhA subfamily. As to quaternary structure, homotetramer. Zn(2+) serves as cofactor.

The protein localises to the cytoplasm. The catalysed reaction is 2 D-sedoheptulose 7-phosphate = D-glycero-alpha-D-manno-heptose 7-phosphate + D-glycero-beta-D-manno-heptose 7-phosphate. It participates in carbohydrate biosynthesis; D-glycero-D-manno-heptose 7-phosphate biosynthesis; D-glycero-alpha-D-manno-heptose 7-phosphate and D-glycero-beta-D-manno-heptose 7-phosphate from sedoheptulose 7-phosphate: step 1/1. In terms of biological role, catalyzes the isomerization of sedoheptulose 7-phosphate in D-glycero-D-manno-heptose 7-phosphate. The polypeptide is Phosphoheptose isomerase (Geobacter metallireducens (strain ATCC 53774 / DSM 7210 / GS-15)).